The primary structure comprises 257 residues: UPF0246 protein lpl1317 (257 aa).

The protein belongs to the UPF0246 family.

The chain is UPF0246 protein lpl1317 from Legionella pneumophila (strain Lens).